We begin with the raw amino-acid sequence, 679 residues long: Cysteine-rich receptor-like protein kinase 29 (679 aa).

Residues 1 to 23 (MEHVRVIFFFACFLTLAPFHAFA) form the signal peptide. Residues 24 to 286 (QVDSYEFDPD…RTGKGKGGSK (263 aa)) lie on the Extracellular side of the membrane. Gnk2-homologous domains lie at 30–134 (FDPD…NRTI) and 140–249 (TNPT…TWRF). Asn-41, Asn-45, Asn-71, Asn-107, Asn-131, and Asn-187 each carry an N-linked (GlcNAc...) asparagine glycan. Residues 260 to 281 (PPAIQPADSPQSAARTERTGKG) are disordered. A helical membrane pass occupies residues 287 to 307 (VIIAIVIPILLVALLAICLCL). Residues 308 to 679 (VLKWRKNKSG…DVTVSEFSPR (372 aa)) are Cytoplasmic-facing. In terms of domain architecture, Protein kinase spans 357 to 637 (FSSENELGRG…SLMLNSYSFT (281 aa)). Residues 363–371 (LGRGGFGSV) and Lys-385 contribute to the ATP site. At Tyr-430 the chain carries Phosphotyrosine. Catalysis depends on Asp-482, which acts as the Proton acceptor. At Ser-486 the chain carries Phosphoserine. The residue at position 524 (Thr-524) is a Phosphothreonine. Tyr-532 carries the post-translational modification Phosphotyrosine. Positions 659-679 (SSTEGLQMSSNDVTVSEFSPR) are disordered.

This sequence belongs to the protein kinase superfamily. Ser/Thr protein kinase family. CRK subfamily.

The protein resides in the membrane. The catalysed reaction is L-seryl-[protein] + ATP = O-phospho-L-seryl-[protein] + ADP + H(+). It carries out the reaction L-threonyl-[protein] + ATP = O-phospho-L-threonyl-[protein] + ADP + H(+). This is Cysteine-rich receptor-like protein kinase 29 (CRK29) from Arabidopsis thaliana (Mouse-ear cress).